Here is a 208-residue protein sequence, read N- to C-terminus: Large ribosomal subunit protein bL25 (208 aa).

A disordered region spans residues Leu-178–Glu-208. Positions Pro-186–Lys-195 are enriched in acidic residues. The segment covering Glu-196–Glu-208 has biased composition (basic and acidic residues).

This sequence belongs to the bacterial ribosomal protein bL25 family. CTC subfamily. Part of the 50S ribosomal subunit; part of the 5S rRNA/L5/L18/L25 subcomplex. Contacts the 5S rRNA. Binds to the 5S rRNA independently of L5 and L18.

In terms of biological role, this is one of the proteins that binds to the 5S RNA in the ribosome where it forms part of the central protuberance. The chain is Large ribosomal subunit protein bL25 from Bacillus pumilus (strain SAFR-032).